The sequence spans 43 residues: Protein PsbN (43 aa).

A helical transmembrane segment spans residues 5–27 (TLVAISISCLLVSFTGYALYTAF).

Belongs to the PsbN family.

The protein resides in the plastid. Its subcellular location is the chloroplast thylakoid membrane. May play a role in photosystem I and II biogenesis. This chain is Protein PsbN, found in Cedrus deodara (Deodar cedar).